The primary structure comprises 383 residues: Polyketide synthase 4 (383 aa).

The active-site Nucleophile and monoketide coumarate intermediate is Cys164.

It belongs to the thiolase-like superfamily. Chalcone/stilbene synthases family. As to quaternary structure, homodimer. In terms of tissue distribution, expressed in fruits.

The catalysed reaction is 4-coumaroyl-CoA + malonyl-CoA + H2O + H(+) = 4-hydroxybenzalacetone + 2 CO2 + 2 CoA. The enzyme catalyses (E)-4-coumaroyl-CoA + 3 malonyl-CoA + 3 H(+) = 2',4,4',6'-tetrahydroxychalcone + 3 CO2 + 4 CoA. It functions in the pathway secondary metabolite biosynthesis; flavonoid biosynthesis. With respect to regulation, inhibited by glutathione. Bifunctional polyketide synthase producing both 4-hydroxybenzalacetone and naringenin chalcone. Can use p-coumaryl-CoA and ferulyl-CoA as substrates. Catalyzes the initial key reaction step in the biosynthesis of phenylbutanoids. The protein is Polyketide synthase 4 (PKS4) of Rubus idaeus (Raspberry).